Here is a 605-residue protein sequence, read N- to C-terminus: Elongation factor 4 (605 aa).

Positions 11–193 constitute a tr-type G domain; that stretch reads KRIRNFSIIA…QIVTRISPPQ (183 aa). Residues 23-28 and 140-143 each bind GTP; these read DHGKST and NKVD.

This sequence belongs to the TRAFAC class translation factor GTPase superfamily. Classic translation factor GTPase family. LepA subfamily.

The protein resides in the cell membrane. The enzyme catalyses GTP + H2O = GDP + phosphate + H(+). Required for accurate and efficient protein synthesis under certain stress conditions. May act as a fidelity factor of the translation reaction, by catalyzing a one-codon backward translocation of tRNAs on improperly translocated ribosomes. Back-translocation proceeds from a post-translocation (POST) complex to a pre-translocation (PRE) complex, thus giving elongation factor G a second chance to translocate the tRNAs correctly. Binds to ribosomes in a GTP-dependent manner. This is Elongation factor 4 from Onion yellows phytoplasma (strain OY-M).